Reading from the N-terminus, the 340-residue chain is Glycerol-3-phosphate dehydrogenase [NAD(P)+] (340 aa).

NADPH contacts are provided by S13, Y14, and K108. Sn-glycerol 3-phosphate-binding residues include K108, G137, and T139. A141 contacts NADPH. Residues K193, D246, S256, R257, and N258 each contribute to the sn-glycerol 3-phosphate site. K193 functions as the Proton acceptor in the catalytic mechanism. NADPH is bound at residue R257. NADPH-binding residues include I281 and E283.

This sequence belongs to the NAD-dependent glycerol-3-phosphate dehydrogenase family.

It is found in the cytoplasm. It catalyses the reaction sn-glycerol 3-phosphate + NAD(+) = dihydroxyacetone phosphate + NADH + H(+). The enzyme catalyses sn-glycerol 3-phosphate + NADP(+) = dihydroxyacetone phosphate + NADPH + H(+). It functions in the pathway membrane lipid metabolism; glycerophospholipid metabolism. Catalyzes the reduction of the glycolytic intermediate dihydroxyacetone phosphate (DHAP) to sn-glycerol 3-phosphate (G3P), the key precursor for phospholipid synthesis. The sequence is that of Glycerol-3-phosphate dehydrogenase [NAD(P)+] from Bartonella henselae (strain ATCC 49882 / DSM 28221 / CCUG 30454 / Houston 1) (Rochalimaea henselae).